The primary structure comprises 258 residues: 4,5-dihydroxyphthalate decarboxylase (258 aa).

To P.testosteroni DHP decarboxylase.

It catalyses the reaction 4,5-dihydroxyphthalate + H(+) = 3,4-dihydroxybenzoate + CO2. Its pathway is xenobiotic degradation; phthalate degradation; 3,4-dihydroxybenzoate from phthalate: step 3/3. In Pseudomonas putida (Arthrobacter siderocapsulatus), this protein is 4,5-dihydroxyphthalate decarboxylase (pht5).